The sequence spans 458 residues: Sensor histidine kinase ZraS (458 aa).

The Cytoplasmic portion of the chain corresponds to 1–14 (MRFMQRSKDSLAKW). Residues 15–35 (LSAILPVVIVGLVGLFAVTVI) traverse the membrane as a helical segment. Topologically, residues 36 to 194 (RDYGRETAAA…SAEDREQRNT (159 aa)) are periplasmic. Residues 195–215 (LIILFALATVLLASVLSFFWY) traverse the membrane as a helical segment. Topologically, residues 216 to 458 (RRYLRSRQLL…VNITRKDPQG (243 aa)) are cytoplasmic. The 208-residue stretch at 244–451 (GVAHEIRNPL…RFTLWLPVNI (208 aa)) folds into the Histidine kinase domain. Histidine 247 carries the phosphohistidine; by autocatalysis modification.

Post-translationally, autophosphorylated.

It localises to the cell inner membrane. It carries out the reaction ATP + protein L-histidine = ADP + protein N-phospho-L-histidine.. Activity of the ZraS/ZraR two-component system is repressed by the zinc-bound form of ZraP, which probably interacts with the periplasmic region of ZraS. Part of the Zra signaling pathway, an envelope stress response (ESR) system composed of the periplasmic accessory protein ZraP, the histidine kinase ZraS and the transcriptional regulator ZraR. The ZraPSR system contributes to antibiotic resistance and is important for membrane integrity in the presence of membrane-targeting biocides. ZraS is a member of the two-component regulatory system ZraS/ZraR. Functions as a membrane-associated sensor kinase that phosphorylates ZraR in response to high concentrations of Zn(2+) or Pb(2+) in the medium. The polypeptide is Sensor histidine kinase ZraS (zraS) (Escherichia coli O157:H7).